The following is a 320-amino-acid chain: Biotin synthase 2 (320 aa).

The Radical SAM core domain occupies 34-261 (NVVQCSKLLS…ASYVRLSAGR (228 aa)). Residues Cys-49, Cys-53, and Cys-56 each contribute to the [4Fe-4S] cluster site. 4 residues coordinate [2Fe-2S] cluster: Cys-93, Cys-124, Cys-184, and Arg-256.

The protein belongs to the radical SAM superfamily. Biotin synthase family. Homodimer. It depends on [4Fe-4S] cluster as a cofactor. Requires [2Fe-2S] cluster as cofactor.

It catalyses the reaction (4R,5S)-dethiobiotin + (sulfur carrier)-SH + 2 reduced [2Fe-2S]-[ferredoxin] + 2 S-adenosyl-L-methionine = (sulfur carrier)-H + biotin + 2 5'-deoxyadenosine + 2 L-methionine + 2 oxidized [2Fe-2S]-[ferredoxin]. Its pathway is cofactor biosynthesis; biotin biosynthesis; biotin from 7,8-diaminononanoate: step 2/2. In terms of biological role, catalyzes the conversion of dethiobiotin (DTB) to biotin by the insertion of a sulfur atom into dethiobiotin via a radical-based mechanism. This chain is Biotin synthase 2, found in Paracoccus denitrificans (strain Pd 1222).